We begin with the raw amino-acid sequence, 301 residues long: tRNA pseudouridine synthase B (301 aa).

Asp38 functions as the Nucleophile in the catalytic mechanism.

Belongs to the pseudouridine synthase TruB family. Type 1 subfamily.

It carries out the reaction uridine(55) in tRNA = pseudouridine(55) in tRNA. Functionally, responsible for synthesis of pseudouridine from uracil-55 in the psi GC loop of transfer RNAs. The sequence is that of tRNA pseudouridine synthase B from Limosilactobacillus reuteri (strain DSM 20016) (Lactobacillus reuteri).